The primary structure comprises 86 residues: LPNPSGFVTCLSSISKSVYTPAINLKAVIADPVAKTAVVQAGATLGEVYYXIIYARVLWVGNTTQKLEWIRSLHDYQSSFFPFFSA.

A glycan (N-linked (GlcNAc...) asparagine) is linked at Asn-62.

This sequence belongs to the oxygen-dependent FAD-linked oxidoreductase family. FAD serves as cofactor. In terms of processing, carries MUXF and MMXF, two complex N-linked glycans with alpha-1,3-fucose and beta-1,2-xylose residues in their structures. MMXF is added to Asn-62.

This chain is Allergen Api g 5, found in Apium graveolens (Celery).